Consider the following 257-residue polypeptide: Triosephosphate isomerase (257 aa).

9–11 (NWK) is a binding site for substrate. The active-site Electrophile is His97. Glu169 (proton acceptor) is an active-site residue. Residues Gly175, Ser214, and 235-236 (GG) contribute to the substrate site.

The protein belongs to the triosephosphate isomerase family. As to quaternary structure, homodimer.

The protein resides in the cytoplasm. The enzyme catalyses D-glyceraldehyde 3-phosphate = dihydroxyacetone phosphate. Its pathway is carbohydrate biosynthesis; gluconeogenesis. It functions in the pathway carbohydrate degradation; glycolysis; D-glyceraldehyde 3-phosphate from glycerone phosphate: step 1/1. In terms of biological role, involved in the gluconeogenesis. Catalyzes stereospecifically the conversion of dihydroxyacetone phosphate (DHAP) to D-glyceraldehyde-3-phosphate (G3P). In Vibrio cholerae serotype O1 (strain ATCC 39315 / El Tor Inaba N16961), this protein is Triosephosphate isomerase.